Reading from the N-terminus, the 87-residue chain is Translation initiation factor IF-1 2 (87 aa).

The 72-residue stretch at 1–72 (MAKEELLELD…TKGRINFRHK (72 aa)) folds into the S1-like domain. The interval 68 to 87 (NFRHKDANSPRPPRSGQPRR) is disordered. Residues 77–87 (PRPPRSGQPRR) are compositionally biased toward pro residues.

Belongs to the IF-1 family. Component of the 30S ribosomal translation pre-initiation complex which assembles on the 30S ribosome in the order IF-2 and IF-3, IF-1 and N-formylmethionyl-tRNA(fMet); mRNA recruitment can occur at any time during PIC assembly.

Its subcellular location is the cytoplasm. Its function is as follows. One of the essential components for the initiation of protein synthesis. Stabilizes the binding of IF-2 and IF-3 on the 30S subunit to which N-formylmethionyl-tRNA(fMet) subsequently binds. Helps modulate mRNA selection, yielding the 30S pre-initiation complex (PIC). Upon addition of the 50S ribosomal subunit IF-1, IF-2 and IF-3 are released leaving the mature 70S translation initiation complex. This Burkholderia cenocepacia (strain HI2424) protein is Translation initiation factor IF-1 2.